The primary structure comprises 305 residues: Putative ABC transporter molybdenum-binding protein HVO_B0369 (305 aa).

A signal peptide (tat-type signal) is located at residues 1 to 40 (MNPDSAAGRSSRRAFLAAVGGVAAGGLTATAGCLGRGEEA).

This sequence belongs to the bacterial solute-binding protein 1 family. WtpA subfamily. The complex is composed of two ATP-binding proteins, two transmembrane proteins (HVO_B0370) and a solute-binding protein (HVO_B0369). In terms of processing, predicted to be exported by the Tat system. The position of the signal peptide cleavage has not been experimentally proven.

In terms of biological role, part of an ABC transporter complex involved in molybdenum import. This chain is Putative ABC transporter molybdenum-binding protein HVO_B0369, found in Haloferax volcanii (strain ATCC 29605 / DSM 3757 / JCM 8879 / NBRC 14742 / NCIMB 2012 / VKM B-1768 / DS2) (Halobacterium volcanii).